A 423-amino-acid polypeptide reads, in one-letter code: Kynureninase (423 aa).

Pyridoxal 5'-phosphate-binding positions include L105, S106, 133–136 (FPSD), D218, H221, and Y243. Position 244 is an N6-(pyridoxal phosphate)lysine (K244). Pyridoxal 5'-phosphate-binding residues include W273 and N301.

This sequence belongs to the kynureninase family. In terms of assembly, homodimer. It depends on pyridoxal 5'-phosphate as a cofactor.

It carries out the reaction L-kynurenine + H2O = anthranilate + L-alanine + H(+). It catalyses the reaction 3-hydroxy-L-kynurenine + H2O = 3-hydroxyanthranilate + L-alanine + H(+). Its pathway is amino-acid degradation; L-kynurenine degradation; L-alanine and anthranilate from L-kynurenine: step 1/1. The protein operates within cofactor biosynthesis; NAD(+) biosynthesis; quinolinate from L-kynurenine: step 2/3. In terms of biological role, catalyzes the cleavage of L-kynurenine (L-Kyn) and L-3-hydroxykynurenine (L-3OHKyn) into anthranilic acid (AA) and 3-hydroxyanthranilic acid (3-OHAA), respectively. This chain is Kynureninase, found in Xanthomonas oryzae pv. oryzae (strain KACC10331 / KXO85).